The primary structure comprises 199 residues: Chaperone protein TorD (199 aa).

This sequence belongs to the TorD/DmsD family. TorD subfamily.

Its subcellular location is the cytoplasm. Involved in the biogenesis of TorA. Acts on TorA before the insertion of the molybdenum cofactor and, as a result, probably favors a conformation of the apoenzyme that is competent for acquiring the cofactor. The sequence is that of Chaperone protein TorD from Shigella boydii serotype 18 (strain CDC 3083-94 / BS512).